A 221-amino-acid polypeptide reads, in one-letter code: Late protein I196L (221 aa).

A run of 3 repeats spans residues S28–S48, S49–S69, and S70–S90. The stretch at S91 to S112 is one 4; approximate repeat.

Belongs to the asfivirus I196L family.

This African swine fever virus (isolate Tick/Malawi/Lil 20-1/1983) (ASFV) protein is Late protein I196L.